A 260-amino-acid polypeptide reads, in one-letter code: 5-oxoprolinase subunit A 2 (260 aa).

Belongs to the LamB/PxpA family. Forms a complex composed of PxpA, PxpB and PxpC.

It carries out the reaction 5-oxo-L-proline + ATP + 2 H2O = L-glutamate + ADP + phosphate + H(+). In terms of biological role, catalyzes the cleavage of 5-oxoproline to form L-glutamate coupled to the hydrolysis of ATP to ADP and inorganic phosphate. In Ralstonia nicotianae (strain ATCC BAA-1114 / GMI1000) (Ralstonia solanacearum), this protein is 5-oxoprolinase subunit A 2.